The chain runs to 343 residues: Phenylalanine--tRNA ligase alpha subunit (343 aa).

Glu264 is a binding site for Mg(2+).

It belongs to the class-II aminoacyl-tRNA synthetase family. Phe-tRNA synthetase alpha subunit type 1 subfamily. In terms of assembly, tetramer of two alpha and two beta subunits. It depends on Mg(2+) as a cofactor.

The protein resides in the cytoplasm. The catalysed reaction is tRNA(Phe) + L-phenylalanine + ATP = L-phenylalanyl-tRNA(Phe) + AMP + diphosphate + H(+). The chain is Phenylalanine--tRNA ligase alpha subunit from Aromatoleum aromaticum (strain DSM 19018 / LMG 30748 / EbN1) (Azoarcus sp. (strain EbN1)).